The chain runs to 520 residues: Putative hydrolase Mb2247c (520 aa).

The N-terminal stretch at 1–34 (MAAMWRRRPLSSALLSFGLLLGGLPLAAPPLAGA) is a signal peptide. Residues 104 to 124 (FGALLVNPGGPGASAVDMVAA) traverse the membrane as a helical segment. The AB hydrolase-1 domain occupies 105–403 (GALLVNPGGP…APTPADPAAW (299 aa)). The active-site Nucleophile is serine 232. The active site involves aspartate 461. Histidine 488 (proton donor) is an active-site residue.

It belongs to the peptidase S33 family.

Its subcellular location is the cell membrane. This Mycobacterium bovis (strain ATCC BAA-935 / AF2122/97) protein is Putative hydrolase Mb2247c.